The primary structure comprises 198 residues: T-cell surface glycoprotein CD3 epsilon chain (198 aa).

A signal peptide spans 1-21; sequence MRAGTLWRVLALWLLSVAAWG. The Extracellular portion of the chain corresponds to 22–120; that stretch reads QEDDDHADDY…EACMEVDLTT (99 aa). Positions 28–106 constitute an Ig-like domain; it reads ADDYTQKLFT…KENEHILYLK (79 aa). Cysteine 49 and cysteine 90 are disulfide-bonded. Residues 121–141 form a helical membrane-spanning segment; that stretch reads VASIVVADVCVTLGLLLLVYY. Topologically, residues 142-198 are cytoplasmic; sequence WSKNRKAKCKPVTRGAGAGGRPRGQNKERPPPVPNPDYEPIRKGQRDLYSGLNQRGI. Residues 153–198 are disordered; sequence VTRGAGAGGRPRGQNKERPPPVPNPDYEPIRKGQRDLYSGLNQRGI. The NUMB-binding region stretch occupies residues 166–183; that stretch reads QNKERPPPVPNPDYEPIR. Positions 169-196 constitute an ITAM domain; it reads ERPPPVPNPDYEPIRKGQRDLYSGLNQR. The tract at residues 170–177 is proline-rich sequence; the sequence is RPPPVPNP. Residues tyrosine 179 and tyrosine 190 each carry the phosphotyrosine modification.

In terms of assembly, the TCR-CD3 complex is composed of a CD3D/CD3E and a CD3G/CD3E heterodimers that preferentially associate with TCRalpha and TCRbeta, respectively, to form TCRalpha/CD3E/CD3G and TCRbeta/CD3G/CD3E trimers. In turn, the hexamer interacts with CD3Z homodimer to form the TCR-CD3 complex. Alternatively, TCRalpha and TCRbeta can be replaced by TCRgamma and TCRdelta. Interacts with CD6. Interacts (via Proline-rich sequence) with NCK1; the interaction is ligand dependent but independent of tyrosine kinase activation. Post-translationally, phosphorylated on Tyr residues after T-cell receptor triggering by LCK in association with CD4/CD8.

It localises to the cell membrane. Its function is as follows. Part of the TCR-CD3 complex present on T-lymphocyte cell surface that plays an essential role in adaptive immune response. When antigen presenting cells (APCs) activate T-cell receptor (TCR), TCR-mediated signals are transmitted across the cell membrane by the CD3 chains CD3D, CD3E, CD3G and CD3Z. All CD3 chains contain immunoreceptor tyrosine-based activation motifs (ITAMs) in their cytoplasmic domain. Upon TCR engagement, these motifs become phosphorylated by Src family protein tyrosine kinases LCK and FYN, resulting in the activation of downstream signaling pathways. In addition of this role of signal transduction in T-cell activation, CD3E plays an essential role in correct T-cell development. Also participates in internalization and cell surface down-regulation of TCR-CD3 complexes via endocytosis sequences present in CD3E cytosolic region. In addition to its role as a TCR coreceptor, it serves as a receptor for ITPRIPL1. Ligand recognition inhibits T-cell activation by promoting interaction with NCK1, which prevents CD3E-ZAP70 interaction and blocks the ERK-NFkB signaling cascade and calcium influx. This Oryctolagus cuniculus (Rabbit) protein is T-cell surface glycoprotein CD3 epsilon chain (CD3E).